Reading from the N-terminus, the 3907-residue chain is Cyclo-acetoacetyl-L-tryptophan synthase (3907 aa).

The Ketosynthase family 3 (KS3) domain maps to 2-436 (KTPIAVVGTA…GTNAHAIIES (435 aa)). Active-site for beta-ketoacyl synthase activity residues include cysteine 176, histidine 313, and histidine 356. Residues 555 to 870 (IFTGQGAQWA…SLLRRGQNDL (316 aa)) form a malonyl-CoA:ACP transacylase (MAT) domain region. An N-terminal hotdog fold region spans residues 937–1074 (HPLLGRRSAD…ARLTLHLGDA (138 aa)). Residues 937 to 1236 (HPLLGRRSAD…GLVMKSVPQP (300 aa)) are dehydratase (DH) domain. The 303-residue stretch at 937–1239 (HPLLGRRSAD…MKSVPQPDTS (303 aa)) folds into the PKS/mFAS DH domain. The C-terminal hotdog fold stretch occupies residues 1092–1239 (LAPVDVADLY…MKSVPQPDTS (148 aa)). The interval 1386-1573 (AAMFSQLSKD…FSGIDHIFHD (188 aa)) is methyltransferase (MT) domain. Positions 2064–2238 (GTYFMIDMAT…VGSVMALGMV (175 aa)) are ketoreductase (KR)domain. Positions 2324–2352 (TKEGQYAEQEDSPSLLVPDEQLQESGPGR) are disordered. One can recognise a Carrier 1 domain in the interval 2356 to 2430 (DDLLARLSGK…LCEKAVPKPN (75 aa)). Serine 2390 is modified (O-(pantetheine 4'-phosphoryl)serine). The condensation stretch occupies residues 2504 to 2926 (MSPHQSQIWF…SSNPLISVQS (423 aa)). Residues 2959 to 3359 (FQDMVDQYGD…GSLILLGRMD (401 aa)) form an adenylation region. The region spanning 3474–3549 (KRLTLGEGEL…QMALKVDARK (76 aa)) is the Carrier 2 domain. Serine 3509 is modified (O-(pantetheine 4'-phosphoryl)serine). A reductase (RED) domain region spans residues 3594 to 3813 (LTGSTSFLGR…DFQKVEIIAE (220 aa)).

In the C-terminal section; belongs to the NRP synthetase family.

The catalysed reaction is L-tryptophan + malonyl-CoA + acetyl-CoA = cyclo-acetoacetyl-L-tryptophan + CO2 + 2 CoA + H2O. It participates in secondary metabolite biosynthesis. Hybrid PKS-NRPS synthetase; part of the gene cluster that mediates the biosynthesis of the fungal neurotoxin cyclopiazonic acid (CPA), a nanomolar inhibitor of Ca(2+)-ATPase with a unique pentacyclic indole tetramic acid scaffold. The hybrid two module polyketide synthase-nonribosomal peptide synthetase (PKS-NRPS) cpaS incorporates acetyl-CoA, malonyl-CoA, and tryptophan (Trp) and utilizes a C-terminal redox-incompetent reductase domain to make and release the tryptophan tetramic acid, cyclo-acetoacetyl-L-tryptophan (c-AATrp), as the first intermediate in the pathway. CpaS catalyzes a Dieckmann-type cyclization on the N-acetoacetyl-Trp intermediate bound in thioester linkage to the phosphopantetheinyl arm of the T domain to form and release c-AATrp. CpaD then regiospecifically dimethylallylates c-AATrp to form beta-cyclopiazonic acid. CpaD discriminates against free Trp but accepts tryptophan-containing thiohydantoins, diketopiperazines, and linear peptides as substrates for C4-prenylation and also acts as regiospecific O-dimethylallyltransferase (DMAT) on a tyrosine-derived tetramic acid. The beta-cyclopiazonate dehydrogenase cpaO then carries out the dehydrogenation of beta-CPA to yield an unstable enimine product, which is captured by intramolecular cyclization to create the pentacyclic fused scaffold of alpha-cyclopiazonate. Finally, the cytochrome P450 monooxygenase cpaH mediates the conversion of CPA into the less toxic 2-oxocyclopiazonic acid, the end product of the CPA pathway in A.oryza. In Aspergillus oryzae (Yellow koji mold), this protein is Cyclo-acetoacetyl-L-tryptophan synthase.